Reading from the N-terminus, the 319-residue chain is Beta-ketoacyl-[acyl-carrier-protein] synthase III (319 aa).

Residues Cys113 and His246 contribute to the active site. The interval 247–251 is ACP-binding; the sequence is QANIR. Asn276 is an active-site residue.

It belongs to the thiolase-like superfamily. FabH family. Homodimer.

It is found in the cytoplasm. It catalyses the reaction malonyl-[ACP] + acetyl-CoA + H(+) = 3-oxobutanoyl-[ACP] + CO2 + CoA. The protein operates within lipid metabolism; fatty acid biosynthesis. Its function is as follows. Catalyzes the condensation reaction of fatty acid synthesis by the addition to an acyl acceptor of two carbons from malonyl-ACP. Catalyzes the first condensation reaction which initiates fatty acid synthesis and may therefore play a role in governing the total rate of fatty acid production. Possesses both acetoacetyl-ACP synthase and acetyl transacylase activities. Its substrate specificity determines the biosynthesis of branched-chain and/or straight-chain of fatty acids. The chain is Beta-ketoacyl-[acyl-carrier-protein] synthase III from Ehrlichia chaffeensis (strain ATCC CRL-10679 / Arkansas).